The following is a 330-amino-acid chain: 2-keto-3-deoxygluconate permease (330 aa).

Helical transmembrane passes span Val10–Pro30, Ala42–Ile62, Leu77–Pro97, Gly100–Glu120, Gly140–Val160, Leu163–Ile183, Pro200–Ile220, Leu224–Leu244, Val254–Ala274, and Ala289–Val309.

It belongs to the KdgT transporter family.

The protein resides in the cell membrane. The catalysed reaction is 2-dehydro-3-deoxy-D-gluconate(in) + H(+)(in) = 2-dehydro-3-deoxy-D-gluconate(out) + H(+)(out). Its function is as follows. Catalyzes the proton-dependent uptake of 2-keto-3-deoxygluconate (KDG) into the cell. This chain is 2-keto-3-deoxygluconate permease, found in Bacillus subtilis (strain 168).